The chain runs to 218 residues: Large ribosomal subunit protein uL4 (218 aa).

The disordered stretch occupies residues 46–100 (ARQGTHSTKTRAEVRGGGRKPFRQKGTGRARQGSIRAPHFTGGGISHGPKPRDYA). Residues 62–73 (GGRKPFRQKGTG) are compositionally biased toward basic residues.

The protein belongs to the universal ribosomal protein uL4 family. Part of the 50S ribosomal subunit.

One of the primary rRNA binding proteins, this protein initially binds near the 5'-end of the 23S rRNA. It is important during the early stages of 50S assembly. It makes multiple contacts with different domains of the 23S rRNA in the assembled 50S subunit and ribosome. In terms of biological role, forms part of the polypeptide exit tunnel. In Corynebacterium efficiens (strain DSM 44549 / YS-314 / AJ 12310 / JCM 11189 / NBRC 100395), this protein is Large ribosomal subunit protein uL4.